Reading from the N-terminus, the 415-residue chain is Fructose-like permease IIC component (415 aa).

Topologically, residues 1–46 (MAIKKRSATVVHGASGAAAAVKNPQASKSSFWGELPQHVMSGISRM) are cytoplasmic. The PTS EIIC type-2 domain occupies 35 to 415 (LPQHVMSGIS…RKGKLLIESL (381 aa)). Residues 47-67 (VPTLIMGGVILAFSQLIAYSW) form a helical membrane-spanning segment. Topologically, residues 68–101 (LKIPADIGIMDALNSGKFSGFDLSLLKFAWLSQS) are periplasmic. Residues 102-122 (FGGVLFGFAIPMFAAFVANSI) traverse the membrane as a helical segment. The Cytoplasmic portion of the chain corresponds to 123–126 (GGKL). The helical transmembrane segment at 127–147 (AFPAGFIGGLMSTQPTQLLNF) threads the bilayer. Over 148–157 (DPSTMQWATS) the chain is Periplasmic. A helical transmembrane segment spans residues 158–178 (SPVPSTFIGALIISIVAGYLV). Residues 179–197 (KWMNQKIQLPDFLLAFKTT) lie on the Cytoplasmic side of the membrane. The helical transmembrane segment at 198–218 (FLLPILSAIFVMLAMYYVITP) threads the bilayer. Over 219–237 (FGGWINGGIRTVLTAAGEK) the chain is Periplasmic. The helical transmembrane segment at 238–258 (GALMYAMGIAAATAIDLGGPI) threads the bilayer. The Cytoplasmic portion of the chain corresponds to 259-276 (NKAAGFVAFSFTTDHVLP). The chain crosses the membrane as a helical span at residues 277–297 (VTARSIAIVIPPIGLGLATII). The Periplasmic segment spans residues 298-318 (DRRLTGKRLFNAQLYPQGKTA). A helical transmembrane segment spans residues 319 to 339 (MFLAFMGISEGAIPFALESPI). At 340–341 (TA) the chain is on the cytoplasmic side. The helical transmembrane segment at 342–362 (IPSYMVGAIVGSTAAVWLGAV) threads the bilayer. Residues 363-378 (QWFPESAIWAWPLVTN) lie on the Periplasmic side of the membrane. Residues 379–399 (LGVYMAGIALGAIITALMVVF) traverse the membrane as a helical segment. Topologically, residues 400-415 (LRLMMFRKGKLLIESL) are cytoplasmic.

The protein localises to the cell inner membrane. The phosphoenolpyruvate-dependent sugar phosphotransferase system (PTS), a major carbohydrate active -transport system, catalyzes the phosphorylation of incoming sugar substrates concomitant with their translocation across the cell membrane. The chain is Fructose-like permease IIC component (fryC) from Escherichia coli O6:H1 (strain CFT073 / ATCC 700928 / UPEC).